A 240-amino-acid chain; its full sequence is MRIDVLTLFPEMFSIFNHSIIGRAIEKEILKINTVNIRDYTIDKHKKVDDYPYGGGAGMVMSVQPIVDSIKAVKKENKGKVIFLGPKGKTFNQNLAKELAKEEELIFLCGHYEGIDERAYEYIDMEISLGDFVLTGGEMACIPIVDSICRLVDGVLGSSESYEDESFYNGLLEYPQYTRPAIYEGKSVPEVLLSGHHENIKKWRKAKSLIITDKVRPDLFKKYKLTEEDKKILKDFNKKL.

S-adenosyl-L-methionine contacts are provided by residues Gly-110 and 129–134; that span reads LGDFVL.

Belongs to the RNA methyltransferase TrmD family. Homodimer.

It localises to the cytoplasm. It catalyses the reaction guanosine(37) in tRNA + S-adenosyl-L-methionine = N(1)-methylguanosine(37) in tRNA + S-adenosyl-L-homocysteine + H(+). Specifically methylates guanosine-37 in various tRNAs. In Clostridium botulinum (strain ATCC 19397 / Type A), this protein is tRNA (guanine-N(1)-)-methyltransferase.